We begin with the raw amino-acid sequence, 167 residues long: Peptide deformylase (167 aa).

The Fe cation site is built by cysteine 91 and histidine 133. Glutamate 134 is a catalytic residue. Histidine 137 contacts Fe cation.

Belongs to the polypeptide deformylase family. It depends on Fe(2+) as a cofactor.

The catalysed reaction is N-terminal N-formyl-L-methionyl-[peptide] + H2O = N-terminal L-methionyl-[peptide] + formate. Removes the formyl group from the N-terminal Met of newly synthesized proteins. Requires at least a dipeptide for an efficient rate of reaction. N-terminal L-methionine is a prerequisite for activity but the enzyme has broad specificity at other positions. This is Peptide deformylase from Tolumonas auensis (strain DSM 9187 / NBRC 110442 / TA 4).